Consider the following 217-residue polypeptide: Homeobox protein Hox-B7 (217 aa).

The short motif at 126 to 131 (IYPWMR) is the Antp-type hexapeptide element. The homeobox DNA-binding region spans 137 to 196 (RKRGRQTYTRYQTLELEKEFHYNRYLTRRRRIEIAHTLCLTERQIKIWFQNRRMKWKKEN). A disordered region spans residues 194–217 (KENKTAGPGTTGQDRAEAEEEEEE).

The protein belongs to the Antp homeobox family. In terms of assembly, forms a DNA-binding heterodimer with transcription factor PBX1.

It is found in the nucleus. Its function is as follows. Sequence-specific transcription factor which is part of a developmental regulatory system that provides cells with specific positional identities on the anterior-posterior axis. The protein is Homeobox protein Hox-B7 (HOXB7) of Homo sapiens (Human).